Here is a 509-residue protein sequence, read N- to C-terminus: Hyaluronidase PH-20 (509 aa).

Residues methionine 1–threonine 35 form the signal peptide. Disulfide bonds link cysteine 60–cysteine 351 and cysteine 224–cysteine 238. The N-linked (GlcNAc...) asparagine glycan is linked to asparagine 82. The active-site Proton donor is glutamate 148. Residues asparagine 166, asparagine 235, asparagine 254, and asparagine 368 are each glycosylated (N-linked (GlcNAc...) asparagine). Disulfide bonds link cysteine 376-cysteine 387, cysteine 381-cysteine 435, and cysteine 437-cysteine 464. N-linked (GlcNAc...) asparagine glycosylation is present at asparagine 393. Serine 490 is lipidated: GPI-anchor amidated serine. The propeptide at alanine 491–leucine 509 is removed in mature form.

Belongs to the glycosyl hydrolase 56 family. In terms of processing, N-glycosylated. As to expression, testis.

It localises to the cell membrane. The catalysed reaction is Random hydrolysis of (1-&gt;4)-linkages between N-acetyl-beta-D-glucosamine and D-glucuronate residues in hyaluronate.. Its function is as follows. Involved in sperm-egg adhesion. Upon fertilization sperm must first penetrate a layer of cumulus cells that surrounds the egg before reaching the zona pellucida. The cumulus cells are embedded in a matrix containing hyaluronic acid which is formed prior to ovulation. This protein aids in penetrating the layer of cumulus cells by digesting hyaluronic acid. This chain is Hyaluronidase PH-20 (SPAM1), found in Homo sapiens (Human).